Consider the following 493-residue polypeptide: Anthranilate synthase component 1 (493 aa).

L-tryptophan contacts are provided by residues Ser-48 and 273-275 (PYM). A chorismate-binding site is contributed by 308–309 (GT). Residue Glu-335 coordinates Mg(2+). Residues Tyr-423, Arg-443, 457 to 459 (GGG), and Gly-459 contribute to the chorismate site. Glu-472 serves as a coordination point for Mg(2+).

It belongs to the anthranilate synthase component I family. In terms of assembly, heterotetramer consisting of two non-identical subunits: a beta subunit (TrpG) and a large alpha subunit (TrpE). The cofactor is Mg(2+).

It catalyses the reaction chorismate + L-glutamine = anthranilate + pyruvate + L-glutamate + H(+). It participates in amino-acid biosynthesis; L-tryptophan biosynthesis; L-tryptophan from chorismate: step 1/5. Its activity is regulated as follows. Feedback inhibited by tryptophan. Functionally, part of a heterotetrameric complex that catalyzes the two-step biosynthesis of anthranilate, an intermediate in the biosynthesis of L-tryptophan. In the first step, the glutamine-binding beta subunit (TrpG) of anthranilate synthase (AS) provides the glutamine amidotransferase activity which generates ammonia as a substrate that, along with chorismate, is used in the second step, catalyzed by the large alpha subunit of AS (TrpE) to produce anthranilate. In the absence of TrpG, TrpE can synthesize anthranilate directly from chorismate and high concentrations of ammonia. This chain is Anthranilate synthase component 1 (trpE), found in Pseudomonas putida (Arthrobacter siderocapsulatus).